The chain runs to 141 residues: Hemoglobin subunit alpha (141 aa).

Residues 1–141 form the Globin domain; sequence VLSPTDKTNV…VSTVLTSKYR (141 aa). Phosphoserine is present on S3. Residue K7 is modified to N6-succinyllysine. At T8 the chain carries Phosphothreonine. K11 is subject to N6-succinyllysine. A Phosphotyrosine modification is found at Y24. Position 35 is a phosphoserine (S35). K40 is modified (N6-succinyllysine). S49 is subject to Phosphoserine. Position 58 (H58) interacts with O2. Residue H87 coordinates heme b. S102 is subject to Phosphoserine. T108 is modified (phosphothreonine). S124 carries the phosphoserine modification. 2 positions are modified to phosphothreonine: T134 and T137. The residue at position 138 (S138) is a Phosphoserine.

It belongs to the globin family. As to quaternary structure, heterotetramer of two alpha chains and two beta chains. In terms of tissue distribution, red blood cells.

Functionally, involved in oxygen transport from the lung to the various peripheral tissues. Its function is as follows. Hemopressin acts as an antagonist peptide of the cannabinoid receptor CNR1. Hemopressin-binding efficiently blocks cannabinoid receptor CNR1 and subsequent signaling. This is Hemoglobin subunit alpha (HBA) from Rhinoceros unicornis (Greater Indian rhinoceros).